Consider the following 1406-residue polypeptide: DNA-directed RNA polymerase subunit beta' (1406 aa).

Positions 70, 72, 85, and 88 each coordinate Zn(2+). Mg(2+) is bound by residues D460, D462, and D464. The Zn(2+) site is built by C814, C888, C895, and C898.

The protein belongs to the RNA polymerase beta' chain family. As to quaternary structure, the RNAP catalytic core consists of 2 alpha, 1 beta, 1 beta' and 1 omega subunit. When a sigma factor is associated with the core the holoenzyme is formed, which can initiate transcription. Mg(2+) serves as cofactor. It depends on Zn(2+) as a cofactor.

The enzyme catalyses RNA(n) + a ribonucleoside 5'-triphosphate = RNA(n+1) + diphosphate. Its function is as follows. DNA-dependent RNA polymerase catalyzes the transcription of DNA into RNA using the four ribonucleoside triphosphates as substrates. This chain is DNA-directed RNA polymerase subunit beta', found in Yersinia enterocolitica serotype O:8 / biotype 1B (strain NCTC 13174 / 8081).